The sequence spans 204 residues: Putative AgrB-like protein (204 aa).

Helical transmembrane passes span Y52–L74, L87–I107, N111–A131, and L156–V176.

This sequence belongs to the AgrB family.

The protein localises to the cell membrane. In terms of biological role, may be involved in the proteolytic processing of a quorum sensing system signal molecule precursor. The polypeptide is Putative AgrB-like protein (Listeria monocytogenes serotype 4b (strain CLIP80459)).